Reading from the N-terminus, the 275-residue chain is Autophagy-related protein 5 (275 aa).

K129 is covalently cross-linked (Glycyl lysine isopeptide (Lys-Gly) (interchain with G-Cter in lgg-3/ATG12)). Low complexity predominate over residues 221-231 (LSSSSSSSTDS). Positions 221 to 241 (LSSSSSSSTDSQSEHPPRLIS) are disordered.

This sequence belongs to the ATG5 family. In terms of assembly, most likely a component of a complex at least containing atg-5, lgg-3/ATG12, atg-16.1 and/or atg-16.2. Interacts with lgg-3/ATG12. Interacts with atg-16.1 (via N-terminus) and atg-16.2 (via N-terminus). Post-translationally, conjugated to lgg-3/ATG12; which is essential for autophagy.

It is found in the preautophagosomal structure membrane. Functionally, involved in autophagic vesicle formation. Conjugation with lgg-3/ATG12, through a ubiquitin-like conjugating system involving atg-7 as an E1-like activating enzyme and atg-10 as an E2-like conjugating enzyme, is essential for its function. Most likely a component of an atg-5-lgg-3-atg-16 complex that promotes autophagosome formation by associating with lgg-2, but not lgg-1, at the preautophagosomal membrane. Probably, as part of an atg-5-lgg-3-atg-16 complex, required for lgg-1 lipidation; the complex acts as an E3-like enzyme promoting atg-3-mediated lgg-1 lipidation. Furthermore, association with atg-16.2 is required for the nucleation of lgg-1 positive autophagic vesicles. In Caenorhabditis elegans, this protein is Autophagy-related protein 5.